The primary structure comprises 119 residues: MNWVFLCLAILFEVAGTVSMKLSSGFTKLIPSLLLIFFYGGSLFFLTLTLKSIDVSVAYAVWSGMGIVLITVVGFLFFQEHVSVMKVISIGLIIAGVVSLNLIEHVAVSEPVHKSGQYK.

Transmembrane regions (helical) follow at residues 3–23 (WVFL…MKLS), 29–49 (LIPS…LTLT), 58–78 (AYAV…FLFF), and 87–107 (VISI…EHVA).

It belongs to the drug/metabolite transporter (DMT) superfamily. Small multidrug resistance (SMR) (TC 2.A.7.1) family.

Its subcellular location is the cell membrane. This is an uncharacterized protein from Bacillus subtilis (strain 168).